The primary structure comprises 375 residues: CC-adding tRNA nucleotidyltransferase (375 aa).

CTP is bound at residue G27 to R30. The Mg(2+) site is built by D40 and D42. CTP contacts are provided by residues R95 to D96, N100, D137 to R146, and R177.

This sequence belongs to the tRNA nucleotidyltransferase/poly(A) polymerase family. The cofactor is Mg(2+).

The enzyme catalyses a tRNA precursor + 2 CTP = a tRNA with a 3' CC end + 2 diphosphate. Functionally, tRNA nucleotidyltransferase involved in the synthesis of the tRNA CCA terminus. Adds the two cytidine residues to tRNA. The chain is CC-adding tRNA nucleotidyltransferase from Halalkalibacterium halodurans (strain ATCC BAA-125 / DSM 18197 / FERM 7344 / JCM 9153 / C-125) (Bacillus halodurans).